The chain runs to 690 residues: Eukaryotic translation initiation factor 3 subunit B (690 aa).

The disordered stretch occupies residues 1–37 (MAKKKSEEQSSADANDSDYQEEPNFEDPPGFVDNISD). Residues 15-25 (NDSDYQEEPNF) show a composition bias toward acidic residues. The region spanning 57-141 (SVVVVDNIPK…HTFAVNLFTD (85 aa)) is the RRM domain. WD repeat units lie at residues 207-246 (TRERFTDTFVKWSPLGTYVVTFHKPGVAIWGGSSFQKIQK), 293-331 (DGMSVLSMFRWSHDDKFVARMGENSIHIYETPSFYLLDL), 334-369 (IKIPGIRGFSWSPTDNVIAYWVEEQNQIPARVTLME), 442-484 (EIRE…KPSL), and 530-575 (PDHF…IKRT). The stretch at 595-645 (EEKQKEIKKNLKKYYAAFEQKDRLRLTRASKELLEKRSQLRETFMEYRNKR) forms a coiled coil.

It belongs to the eIF-3 subunit B family. In terms of assembly, component of the eukaryotic translation initiation factor 3 (eIF-3) complex. The eIF-3 complex interacts with pix. Interacts with mxt.

The protein localises to the cytoplasm. Its function is as follows. RNA-binding component of the eukaryotic translation initiation factor 3 (eIF-3) complex, which is involved in protein synthesis of a specialized repertoire of mRNAs and, together with other initiation factors, stimulates binding of mRNA and methionyl-tRNAi to the 40S ribosome. The eIF-3 complex specifically targets and initiates translation of a subset of mRNAs involved in cell proliferation. The protein is Eukaryotic translation initiation factor 3 subunit B of Drosophila sechellia (Fruit fly).